The following is a 385-amino-acid chain: S-adenosylmethionine synthase (385 aa).

ATP is bound at residue His15. Asp17 lines the Mg(2+) pocket. Glu43 is a K(+) binding site. Residues Glu56 and Gln99 each contribute to the L-methionine site. Residues 99–109 (QSPEIAQGVDE) are flexible loop. ATP contacts are provided by residues 164–166 (DAK), 230–231 (RF), Asp239, 245–246 (RK), Ala262, and Lys266. An L-methionine-binding site is contributed by Asp239. Lys270 lines the L-methionine pocket.

The protein belongs to the AdoMet synthase family. Homotetramer; dimer of dimers. Requires Mg(2+) as cofactor. K(+) is required as a cofactor.

The protein localises to the cytoplasm. It carries out the reaction L-methionine + ATP + H2O = S-adenosyl-L-methionine + phosphate + diphosphate. Its pathway is amino-acid biosynthesis; S-adenosyl-L-methionine biosynthesis; S-adenosyl-L-methionine from L-methionine: step 1/1. In terms of biological role, catalyzes the formation of S-adenosylmethionine (AdoMet) from methionine and ATP. The overall synthetic reaction is composed of two sequential steps, AdoMet formation and the subsequent tripolyphosphate hydrolysis which occurs prior to release of AdoMet from the enzyme. This is S-adenosylmethionine synthase from Hydrogenovibrio crunogenus (strain DSM 25203 / XCL-2) (Thiomicrospira crunogena).